Reading from the N-terminus, the 294-residue chain is Epimerase family protein SDR39U1 (294 aa).

Residues 31 to 32, 58 to 59, Glu-77, Arg-82, and Val-160 each bind NADP(+); these read SR and LA.

It belongs to the NAD(P)-dependent epimerase/dehydratase family. SDR39U1 subfamily.

In terms of biological role, putative NADP-dependent oxidoreductase. This is Epimerase family protein SDR39U1 (SDR39U1) from Bos taurus (Bovine).